A 425-amino-acid chain; its full sequence is UPF0597 protein VF_0641 (425 aa).

The protein belongs to the UPF0597 family.

The sequence is that of UPF0597 protein VF_0641 from Aliivibrio fischeri (strain ATCC 700601 / ES114) (Vibrio fischeri).